The following is a 632-amino-acid chain: Bestrophin homolog 24 (632 aa).

4 helical membrane-spanning segments follow: residues 28–48, 83–103, 234–254, and 271–291; these read IWKAVILELAVWLVLYGILSV, GFFVTAVVNRWTYLYQIIGFI, IMYPQLVCLAVHTYFLVCLLA, and LYFPIMSTLQFIFYMGWMKVA. Disordered stretches follow at residues 491 to 516 and 562 to 632; these read LSNKRIDTSSSQPQLATGKRGSEHPF and ETEV…TKFE. Basic and acidic residues predominate over residues 563–602; it reads TEVKRDEKKKKEEELREEGDNGKEEKDNKEDKKEEQDRPS. Residues 623–632 show a composition bias toward basic residues; the sequence is PHLRPPTKFE.

The protein belongs to the anion channel-forming bestrophin (TC 1.A.46) family. Calcium-sensitive chloride channel subfamily. Forms oligomers.

It localises to the cell membrane. In terms of biological role, forms chloride channels. The protein is Bestrophin homolog 24 (best-24) of Caenorhabditis elegans.